A 229-amino-acid chain; its full sequence is Heptaprenylglyceryl phosphate synthase (229 aa).

Residue Lys12 coordinates sn-glycerol 1-phosphate. Residues Asp14 and Thr40 each contribute to the Mg(2+) site. Residues 159–164, Gly189, and 209–210 contribute to the sn-glycerol 1-phosphate site; these read YIEYSG and GN.

Belongs to the GGGP/HepGP synthase family. Group I subfamily. In terms of assembly, homodimer. The cofactor is Mg(2+).

It catalyses the reaction sn-glycerol 1-phosphate + all-trans-heptaprenyl diphosphate = 3-heptaprenyl-sn-glycero-1-phosphate + diphosphate. It functions in the pathway membrane lipid metabolism; glycerophospholipid metabolism. Functionally, prenyltransferase that catalyzes in vivo the transfer of the heptaprenyl moiety of heptaprenyl pyrophosphate (HepPP; 35 carbon atoms) to the C3 hydroxyl of sn-glycerol-1-phosphate (G1P), producing heptaprenylglyceryl phosphate (HepGP). This reaction is an ether-bond-formation step in the biosynthesis of archaea-type G1P-based membrane lipids found in Bacillales. This chain is Heptaprenylglyceryl phosphate synthase, found in Oceanobacillus iheyensis (strain DSM 14371 / CIP 107618 / JCM 11309 / KCTC 3954 / HTE831).